A 238-amino-acid chain; its full sequence is NADH-quinone oxidoreductase subunit C (238 aa).

The tract at residues 1 to 20 is disordered; sequence MSSPDQNPSDAAGQTGSSNE.

It belongs to the complex I 30 kDa subunit family. In terms of assembly, NDH-1 is composed of 14 different subunits. Subunits NuoB, C, D, E, F, and G constitute the peripheral sector of the complex.

The protein resides in the cell membrane. It carries out the reaction a quinone + NADH + 5 H(+)(in) = a quinol + NAD(+) + 4 H(+)(out). Functionally, NDH-1 shuttles electrons from NADH, via FMN and iron-sulfur (Fe-S) centers, to quinones in the respiratory chain. The immediate electron acceptor for the enzyme in this species is believed to be a menaquinone. Couples the redox reaction to proton translocation (for every two electrons transferred, four hydrogen ions are translocated across the cytoplasmic membrane), and thus conserves the redox energy in a proton gradient. This Mycobacterium marinum (strain ATCC BAA-535 / M) protein is NADH-quinone oxidoreductase subunit C.